The primary structure comprises 513 residues: Serine/threonine-protein kinase PBL27 (513 aa).

The interval 1–61 is disordered; the sequence is MSGCLPCFGS…KKELTAPKEG (61 aa). S-palmitoyl cysteine attachment occurs at residues Cys-4 and Cys-7. Composition is skewed to basic and acidic residues over residues 15-27 and 38-57; these read AASKDSVKKELSA and ISLDKSKSRRGPEQKKELTA. Residues 83 to 360 enclose the Protein kinase domain; that stretch reads FRPECLLGEG…GDVVTALTYL (278 aa). ATP contacts are provided by residues 89-97 and Lys-112; that span reads LGEGGFGRV. Catalysis depends on Asp-210, which acts as the Proton acceptor. Ser-244 bears the Phosphoserine; by CERK1 mark. Thr-245 and Thr-250 each carry phosphothreonine; by CERK1. Residues 365–378 show a composition bias toward polar residues; sequence FDPNAPSGQNSRSG. Positions 365-513 are disordered; sequence FDPNAPSGQN…GPGSFDSTND (149 aa). A phosphoserine mark is found at Ser-392 and Ser-401. The span at 417–428 shows a compositional bias: basic and acidic residues; sequence NSPDYRRRDMVR. The span at 434–446 shows a compositional bias: gly residues; that stretch reads SEGGSETGGGSGR. A compositionally biased stretch (polar residues) spans 456–473; sequence QESQRGSPASVGRSSRGT. Basic and acidic residues predominate over residues 475-486; that stretch reads RNRDLDRERAVA. Residues 504–513 show a composition bias toward polar residues; the sequence is GPGSFDSTND.

It belongs to the protein kinase superfamily. Ser/Thr protein kinase family. Interacts with CERK1 (preferentially unphosphorylated) at the plasma membrane. Binds to MAPKKK5 at the plasma membrane; disassociation is induced by chitin perception by the CERK1 complex. Also associates with MAPKKK3. Phosphorylated by CERK1 upon elicitation by chitin. Post-translationally, palmitoylation at Cys-4 and Cys-7 are required for plasma membrane location.

Its subcellular location is the cell membrane. The catalysed reaction is L-seryl-[protein] + ATP = O-phospho-L-seryl-[protein] + ADP + H(+). It carries out the reaction L-threonyl-[protein] + ATP = O-phospho-L-threonyl-[protein] + ADP + H(+). Its function is as follows. Receptor-like cytoplasmic kinase involved in the transduction of signal between the host cell surface chitin receptor complex CERK1-LYK5 and the intracellular MAPKKK5-dependent mitogen-activated protein kinase (MAPK) cascade that leads to chitin-induced immunity. Phosphorylates and activates MAPKKK5 when phosphorylated by CERK1 after elicitation by chitin. This chain is Serine/threonine-protein kinase PBL27, found in Arabidopsis thaliana (Mouse-ear cress).